A 114-amino-acid polypeptide reads, in one-letter code: DNA-directed RNA polymerase subunit Rpo4 (114 aa).

Belongs to the eukaryotic RPB4 RNA polymerase subunit family. Part of the 13-subunit RNA polymerase complex. Forms a stalk with Rpo7 that extends from the main structure. In purified enzyme appears as 5 forms, each differing by about 200 Da of a covalently bound, negatively charged residue. Not glycosylated.

It localises to the cytoplasm. The catalysed reaction is RNA(n) + a ribonucleoside 5'-triphosphate = RNA(n+1) + diphosphate. Functionally, DNA-dependent RNA polymerase catalyzes the transcription of DNA into RNA using the four ribonucleoside triphosphates as substrates. This subunit is less well bound than the others. Probably not involved in transcription initiation. The protein is DNA-directed RNA polymerase subunit Rpo4 of Sulfolobus acidocaldarius (strain ATCC 33909 / DSM 639 / JCM 8929 / NBRC 15157 / NCIMB 11770).